A 313-amino-acid chain; its full sequence is Solute carrier family 35 member E3 (313 aa).

10 helical membrane passes run 14–34 (IIAGLLVNLLSSICIVFINKW), 40–60 (GFPNMTLTLIHFVMTWLGLFI), 77–97 (ILLLALSFCGFVVFTNLSLQS), 100–122 (IGTYQLAKVMTTPVIIAIQTMYY), 130–146 (IKLTLVPITLGVILNSY), 153–173 (LMGMIFATLGVLVTSLYQVWV), 187–207 (LLYYQAPMSSAFLLVLVPFFE), 215–235 (IFGPWSFLALFMVLLSGVIAF), 252–272 (TYNMFGHFKFCITLLGGYVLF), and 275–295 (PLSLNQGLGILCTLTGILAYT).

Belongs to the TPT transporter family. SLC35E subfamily.

It localises to the membrane. Putative transporter. The sequence is that of Solute carrier family 35 member E3 (slc35e3) from Danio rerio (Zebrafish).